The sequence spans 89 residues: Elongation factor 1-beta (89 aa).

The protein belongs to the EF-1-beta/EF-1-delta family.

Functionally, promotes the exchange of GDP for GTP in EF-1-alpha/GDP, thus allowing the regeneration of EF-1-alpha/GTP that could then be used to form the ternary complex EF-1-alpha/GTP/AAtRNA. In Methanococcus maripaludis (strain C5 / ATCC BAA-1333), this protein is Elongation factor 1-beta.